The primary structure comprises 209 residues: Uracil phosphoribosyltransferase (209 aa).

5-phospho-alpha-D-ribose 1-diphosphate is bound by residues Arg79, Arg104, and Asp131 to Ser139. Residues Ile194 and Gly199–Ala201 contribute to the uracil site. Residue Asp200 coordinates 5-phospho-alpha-D-ribose 1-diphosphate.

Belongs to the UPRTase family. Mg(2+) serves as cofactor.

It carries out the reaction UMP + diphosphate = 5-phospho-alpha-D-ribose 1-diphosphate + uracil. It functions in the pathway pyrimidine metabolism; UMP biosynthesis via salvage pathway; UMP from uracil: step 1/1. Its activity is regulated as follows. Allosterically activated by GTP. Catalyzes the conversion of uracil and 5-phospho-alpha-D-ribose 1-diphosphate (PRPP) to UMP and diphosphate. The polypeptide is Uracil phosphoribosyltransferase (Bacillus velezensis (strain DSM 23117 / BGSC 10A6 / LMG 26770 / FZB42) (Bacillus amyloliquefaciens subsp. plantarum)).